Reading from the N-terminus, the 180-residue chain is MTDAGEATPVAELIASLTRQVPDFPKPGIQFKDLTPLFADATAMTAVTGALARHASGADLVAGIDSRGFLVAAAVADRLHTGVLAIRKGGKLPPPVHAERYDLEYGSATLEIPADGIDLRGRRIVIIDDVLATGGTLAAAARLLRRTGATVTAAAVVFELGALGGRAALAPLPVHRLTCQ.

Belongs to the purine/pyrimidine phosphoribosyltransferase family. In terms of assembly, homodimer.

It localises to the cytoplasm. The catalysed reaction is AMP + diphosphate = 5-phospho-alpha-D-ribose 1-diphosphate + adenine. It participates in purine metabolism; AMP biosynthesis via salvage pathway; AMP from adenine: step 1/1. Catalyzes a salvage reaction resulting in the formation of AMP, that is energically less costly than de novo synthesis. This chain is Adenine phosphoribosyltransferase, found in Mycobacterium avium (strain 104).